We begin with the raw amino-acid sequence, 231 residues long: Probable septum site-determining protein MinC (231 aa).

Residues 102–125 (KEKAPRPAPAPQAPTQNTTPVTKT) are disordered. Over residues 114-123 (APTQNTTPVT) the composition is skewed to low complexity.

Belongs to the MinC family. Interacts with MinD and FtsZ.

Cell division inhibitor that blocks the formation of polar Z ring septums. Rapidly oscillates between the poles of the cell to destabilize FtsZ filaments that have formed before they mature into polar Z rings. Prevents FtsZ polymerization. The sequence is that of Probable septum site-determining protein MinC from Escherichia coli O45:K1 (strain S88 / ExPEC).